The chain runs to 568 residues: Lipoprotein LpqB (568 aa).

Residues 1 to 23 (MSKISTKLKALSAVLSVTTLVAG) form the signal peptide. A lipid anchor (N-palmitoyl cysteine) is attached at cysteine 24. The S-diacylglycerol cysteine moiety is linked to residue cysteine 24.

Belongs to the LpqB lipoprotein family.

It localises to the cell membrane. This is Lipoprotein LpqB from Corynebacterium glutamicum (strain R).